We begin with the raw amino-acid sequence, 225 residues long: tRNA 2'-phosphotransferase 1 (225 aa).

Residues 1–21 (MDCETRGRGRRGRGNRNEESR) form a disordered region.

This sequence belongs to the KptA/TPT1 family.

It carries out the reaction 2'-phospho-[ligated tRNA] + NAD(+) = mature tRNA + ADP-alpha-D-ribose 1'',2''-cyclic phosphate + nicotinamide. Its function is as follows. Catalyzes the last step of tRNA splicing, the transfer of the splice junction 2'-phosphate from ligated tRNA to NAD to produce ADP-ribose 1''-2'' cyclic phosphate. The protein is tRNA 2'-phosphotransferase 1 (trpt1) of Danio rerio (Zebrafish).